Reading from the N-terminus, the 316-residue chain is N-acetyl-gamma-glutamyl-phosphate reductase (316 aa).

Residue cysteine 136 is part of the active site.

Belongs to the NAGSA dehydrogenase family. Type 1 subfamily.

The protein resides in the cytoplasm. The enzyme catalyses N-acetyl-L-glutamate 5-semialdehyde + phosphate + NADP(+) = N-acetyl-L-glutamyl 5-phosphate + NADPH + H(+). It participates in amino-acid biosynthesis; L-arginine biosynthesis; N(2)-acetyl-L-ornithine from L-glutamate: step 3/4. Functionally, catalyzes the NADPH-dependent reduction of N-acetyl-5-glutamyl phosphate to yield N-acetyl-L-glutamate 5-semialdehyde. The sequence is that of N-acetyl-gamma-glutamyl-phosphate reductase from Xanthomonas axonopodis pv. citri (strain 306).